A 238-amino-acid chain; its full sequence is Probable transcriptional regulatory protein M6_Spy0297 (238 aa).

It belongs to the TACO1 family. YeeN subfamily.

Its subcellular location is the cytoplasm. The sequence is that of Probable transcriptional regulatory protein M6_Spy0297 from Streptococcus pyogenes serotype M6 (strain ATCC BAA-946 / MGAS10394).